Here is a 77-residue protein sequence, read N- to C-terminus: Major outer membrane lipoprotein Lpp (77 aa).

Positions 1 to 19 (MNRTKLVLGAVILGSHSAG) are cleaved as a signal peptide. Cys20 carries N-palmitoyl cysteine lipidation. Cys20 carries the S-diacylglycerol cysteine lipid modification. Repeats lie at residues 23-33 (NAKIDQLSSDV) and 37-47 (NAKVDQLSNDV). Residues 26–74 (IDQLSSDVQTLNAKVDQLSNDVNAMRSDVQAAKDDAARANQRLDNQAHA) are a coiled coil. The tract at residues 56-77 (AAKDDAARANQRLDNQAHAYKK) is disordered. Lys77 is subject to N6-murein peptidoglycan lysine.

The protein belongs to the Lpp family. In terms of assembly, homotrimer.

It is found in the cell outer membrane. Its subcellular location is the secreted. The protein localises to the cell wall. In terms of biological role, a highly abundant outer membrane lipoprotein that controls the distance between the inner and outer membranes. The only protein known to be covalently linked to the peptidoglycan network (PGN). Also non-covalently binds the PGN. The link between the cell outer membrane and PGN contributes to maintenance of the structural and functional integrity of the cell envelope, and maintains the correct distance between the PGN and the outer membrane. The protein is Major outer membrane lipoprotein Lpp of Serratia marcescens.